A 141-amino-acid chain; its full sequence is Nucleoside diphosphate kinase (141 aa).

ATP-binding residues include K11, F59, R87, T93, R104, and N114. Residue H117 is the Pros-phosphohistidine intermediate of the active site.

The protein belongs to the NDK family. As to quaternary structure, homotetramer. The cofactor is Mg(2+).

Its subcellular location is the cytoplasm. It carries out the reaction a 2'-deoxyribonucleoside 5'-diphosphate + ATP = a 2'-deoxyribonucleoside 5'-triphosphate + ADP. The enzyme catalyses a ribonucleoside 5'-diphosphate + ATP = a ribonucleoside 5'-triphosphate + ADP. Its function is as follows. Major role in the synthesis of nucleoside triphosphates other than ATP. The ATP gamma phosphate is transferred to the NDP beta phosphate via a ping-pong mechanism, using a phosphorylated active-site intermediate. The protein is Nucleoside diphosphate kinase of Serratia proteamaculans (strain 568).